Here is a 235-residue protein sequence, read N- to C-terminus: Claudin-16 (235 aa).

Topologically, residues 1–3 (MKD) are cytoplasmic. The helical transmembrane segment at 4–24 (LLQYAACFLAIFSTGFLIVAT) threads the bilayer. At 25-79 (RTDCWMVNADDSLEVSTKCRGLWWECVTNAFDGIRTCDEYDSIYAEHPLKLVVTR) the chain is on the extracellular side. A helical membrane pass occupies residues 80-100 (ALMITADILAGFGFITLLLGL). Residues 101-115 (DCVKFLPDEPHIKVR) are Cytoplasmic-facing. A helical transmembrane segment spans residues 116 to 136 (LCFVAGTVLLIAGTPGIIGSV). Topologically, residues 137–169 (WYAVDVYVERSSLVLHNIFLGIQYKFGWSCWLG) are extracellular. A helical transmembrane segment spans residues 170–190 (MAGSLGCFLAGALLTCCLYLF). Residues 191–235 (KDVGPERNYPYAMRKPYSTAGVSMAKSYKAPRTETAKMYAVDTRV) are Cytoplasmic-facing. The Interaction with TJP1 signature appears at 233 to 235 (TRV).

This sequence belongs to the claudin family. As to quaternary structure, can form heteropolymeric tight junction strands with other claudins. Interacts with CLDN19. Interacts (via PDZ-binding motif TRV) with TJP1 (via PDZ domain). Cannot form tight junction strands on its own.

Its subcellular location is the cell junction. The protein resides in the tight junction. It is found in the cell membrane. It carries out the reaction Mg(2+)(in) = Mg(2+)(out). The catalysed reaction is Ca(2+)(in) = Ca(2+)(out). The enzyme catalyses Na(+)(in) = Na(+)(out). It catalyses the reaction K(+)(in) = K(+)(out). It carries out the reaction Rb(+)(in) = Rb(+)(out). The catalysed reaction is Cs(+)(in) = Cs(+)(out). The enzyme catalyses Li(+)(in) = Li(+)(out). In terms of biological role, forms paracellular channels: coassembles with CLDN19 into tight junction strands with cation-selective channels through the strands, conveying epithelial permeability in a process known as paracellular tight junction permeability. Involved in the maintenance of ion gradients along the nephron. In the thick ascending limb (TAL) of Henle's loop, facilitates sodium paracellular permeability from the interstitial compartment to the lumen, contributing to the lumen-positive transepithelial potential that drives paracellular magnesium and calcium reabsorption. This chain is Claudin-16, found in Rattus norvegicus (Rat).